A 409-amino-acid polypeptide reads, in one-letter code: MSKVVERFLKYVKYHTTSDENSNTFPSTEGQLIFARELAKELKELGLSEVEVDENGYVTALLSANTDKKIPTIGFIAHMDTSPDMCGKDVKPQIIENYDGNDIVLNKEKGIILSTSEFPELKNYIGKTLITTDGTTLLGADDKAGIAEIITAIEYLINHPEIEHGNVKIAFTPDEEIGRGVDKFNVKKFACDFAYTVDGGELGTIEYENFNAASAKIKIHGRNVHPGTAKGKMKNSILIGIELQNMLPELERPEHTEGYQGFYHLNNFQGTVEETSMYYIIRDFDKQAFSDKKEYIKSIVEALNKKYGEGTVELELKDQYYNMREVIEKHMHIVETAMEAMRSLGIEPKVVPIRGGTDGARLSFMGLPTPNLFTGGHNFHGKYEFIPIHAMEKAVEVIVKIVELYGKKG.

H78 provides a ligand contact to Zn(2+). The active site involves D80. D141 lines the Zn(2+) pocket. E175 (proton acceptor) is an active-site residue. Zn(2+) is bound by residues E176, D198, and H380.

It belongs to the peptidase M20B family. It depends on Zn(2+) as a cofactor.

The protein resides in the cytoplasm. It carries out the reaction Release of the N-terminal residue from a tripeptide.. Functionally, cleaves the N-terminal amino acid of tripeptides. This is Peptidase T from Caldanaerobacter subterraneus subsp. tengcongensis (strain DSM 15242 / JCM 11007 / NBRC 100824 / MB4) (Thermoanaerobacter tengcongensis).